The sequence spans 582 residues: Formate--tetrahydrofolate ligase (582 aa).

Residue 65 to 72 (TPLGEGKT) coordinates ATP.

This sequence belongs to the formate--tetrahydrofolate ligase family.

The enzyme catalyses (6S)-5,6,7,8-tetrahydrofolate + formate + ATP = (6R)-10-formyltetrahydrofolate + ADP + phosphate. It functions in the pathway one-carbon metabolism; tetrahydrofolate interconversion. The chain is Formate--tetrahydrofolate ligase from Vibrio atlanticus (strain LGP32) (Vibrio splendidus (strain Mel32)).